The chain runs to 405 residues: K(+)/H(+) antiporter subunit KhtU (405 aa).

12 helical membrane passes run 3–23, 29–49, 60–80, 85–105, 108–128, 153–173, 183–203, 222–242, 268–288, 297–317, 332–352, and 357–377; these read HLVF…VIAN, IIPF…KMGI, IIEF…GLEF, LIKS…INFS, LLYG…AGVI, LILG…SVVS, VGSA…FFIA, VFII…ETIH, LVVP…GLSI, VWLA…AGMV, IGLT…LGIA, and ATLK…GPLV.

Belongs to the monovalent cation:proton antiporter 2 (CPA2) transporter (TC 2.A.37) family. As to quaternary structure, the transporter is composed of the integral membrane protein KhtU and the regulatory protein KhtT.

Its subcellular location is the cell membrane. Its activity is regulated as follows. Potassium antiport activity requires the presence of KhtT. Activity is also modulated by KhtS. Has higher activity at alkaline pH. Potassium/proton antiporter that mediates the efflux of potassium ions from the cell. Can also mediate rubidium/proton antiport, but has no permeability for sodium or lithium ions. In the absence of KhtT, does not have antiport activity, but can catalyze potassium efflux. Involved in protection of the cell from methylglyoxal, a toxic by-product of glycolysis, via activation by S-lactoyl-BSH of the antiporter activity, leading to cytoplasmic acidification and methylglyoxal resistance. This chain is K(+)/H(+) antiporter subunit KhtU, found in Bacillus subtilis (strain 168).